The sequence spans 305 residues: Ribosomal protein L11 methyltransferase (305 aa).

The S-adenosyl-L-methionine site is built by Thr-152, Gly-173, Asp-195, and Asn-237.

Belongs to the methyltransferase superfamily. PrmA family.

The protein localises to the cytoplasm. The enzyme catalyses L-lysyl-[protein] + 3 S-adenosyl-L-methionine = N(6),N(6),N(6)-trimethyl-L-lysyl-[protein] + 3 S-adenosyl-L-homocysteine + 3 H(+). Its function is as follows. Methylates ribosomal protein L11. The sequence is that of Ribosomal protein L11 methyltransferase from Hamiltonella defensa subsp. Acyrthosiphon pisum (strain 5AT).